The chain runs to 97 residues: ESAT-6-like protein EsxS (97 aa).

It belongs to the WXG100 family. CFP-10 subfamily. Forms a tight complex with EsxR. Exists in heterodimeric and heterotetrameric forms.

The protein localises to the secreted. The sequence is that of ESAT-6-like protein EsxS from Mycobacterium tuberculosis (strain ATCC 25618 / H37Rv).